The primary structure comprises 249 residues: Exosome complex component Rrp41 (249 aa).

Belongs to the RNase PH family. Rrp41 subfamily. In terms of assembly, component of the archaeal exosome complex. Forms a hexameric ring-like arrangement composed of 3 Rrp41-Rrp42 heterodimers. The hexameric ring associates with a trimer of Rrp4 and/or Csl4 subunits.

The protein localises to the cytoplasm. Its function is as follows. Catalytic component of the exosome, which is a complex involved in RNA degradation. Has 3'-&gt;5' exoribonuclease activity. Can also synthesize heteromeric RNA-tails. The protein is Exosome complex component Rrp41 of Thermococcus onnurineus (strain NA1).